The sequence spans 450 residues: ATP-dependent protease ATPase subunit HslU (450 aa).

Residues Val29, Gly71–Glu76, Asp261, Glu328, and Arg400 each bind ATP.

The protein belongs to the ClpX chaperone family. HslU subfamily. As to quaternary structure, a double ring-shaped homohexamer of HslV is capped on each side by a ring-shaped HslU homohexamer. The assembly of the HslU/HslV complex is dependent on binding of ATP.

It localises to the cytoplasm. ATPase subunit of a proteasome-like degradation complex; this subunit has chaperone activity. The binding of ATP and its subsequent hydrolysis by HslU are essential for unfolding of protein substrates subsequently hydrolyzed by HslV. HslU recognizes the N-terminal part of its protein substrates and unfolds these before they are guided to HslV for hydrolysis. This is ATP-dependent protease ATPase subunit HslU from Rickettsia akari (strain Hartford).